The chain runs to 317 residues: Probable RuBisCO transcriptional regulator (317 aa).

The 58-residue stretch at 6–63 folds into the HTH lysR-type domain; sequence FTLDQLRILKAIAKEGSFKKAANSLYVSQPAISLQIQNLERQLNVALFERGNKKATLT. A DNA-binding region (H-T-H motif) is located at residues 23–42; it reads FKKAANSLYVSQPAISLQIQ.

The protein belongs to the LysR transcriptional regulatory family.

Its subcellular location is the plastid. The protein localises to the chloroplast. Trans-acting transcriptional regulator of RuBisCO genes (rbcL and rbcS) expression. This chain is Probable RuBisCO transcriptional regulator (rbcR), found in Porphyra purpurea (Red seaweed).